We begin with the raw amino-acid sequence, 477 residues long: Glutamyl-tRNA reductase (477 aa).

Residues 49-52, Ser109, 114-116, and Gln120 contribute to the substrate site; these read TCNR and EGQ. The active-site Nucleophile is Cys50. 221–226 is an NADP(+) binding site; sequence GAGSMS.

Belongs to the glutamyl-tRNA reductase family. Homodimer.

The enzyme catalyses (S)-4-amino-5-oxopentanoate + tRNA(Glu) + NADP(+) = L-glutamyl-tRNA(Glu) + NADPH + H(+). Its pathway is porphyrin-containing compound metabolism; protoporphyrin-IX biosynthesis; 5-aminolevulinate from L-glutamyl-tRNA(Glu): step 1/2. Catalyzes the NADPH-dependent reduction of glutamyl-tRNA(Glu) to glutamate 1-semialdehyde (GSA). This is Glutamyl-tRNA reductase from Thermobifida fusca (strain YX).